We begin with the raw amino-acid sequence, 584 residues long: DNA damage-binding protein 2 (584 aa).

The disordered stretch occupies residues 1–87; that stretch reads MGPTTRARFV…PVAAAARSGR (87 aa). Residues 8 to 20 are compositionally biased toward basic residues; that stretch reads RFVHNRRRRRRRG. 2 stretches are compositionally biased toward acidic residues: residues 25 to 35 and 45 to 66; these read PDDDDEEEDQQ and DEGEEDAEEEGSGEVDDDDGEA. The CCHC-type zinc finger occupies 122-140; the sequence is KPCFLCKMPGGHTTLTCPH. WD repeat units follow at residues 192–232, 236–278, 288–327, 333–373, 378–418, 438–481, and 484–523; these read FHQR…EKIT, VHSC…SLLN, STWRMIYGMDFNSDKGLLLVADSFGFLHLLDRRLKARIGD, KKGS…PNSA, AHGR…LESP, EWDP…LAEV, and PDITTISPVNKLHPRDDILASGSSRSIFIWKPKTESDATE. Residues 351–366 carry the DWD box motif; sequence LLSSGNDHYARIWDTR. Over residues 517–532 the composition is skewed to basic and acidic residues; sequence TESDATEERNREKAKE. Positions 517-584 are disordered; that stretch reads TESDATEERN…TIKGKGKSKV (68 aa). Positions 562-584 are enriched in basic residues; sequence KKKKKAKKTRFTHTIKGKGKSKV.

It belongs to the WD repeat DDB2/WDR76 family. In terms of assembly, component of the UV-DDB complex, which is composed of DDB1 and DDB2. As to expression, expressed in proliferating tissues such as shoot apical meristem (SAM), root tips and young leaves. Not detected in mature leaves.

The protein resides in the nucleus. Required for DNA repair. Binds to DDB1 to form the UV-damaged DNA-binding protein complex (the UV-DDB complex). The UV-DDB complex may recognize UV-induced DNA damage and recruit proteins of the nucleotide excision repair pathway (the NER pathway) to initiate DNA repair. May function as the substrate recognition module for a DCX (DDB1-CUL4-X-box) E3 ubiquitin-protein ligase complex. The chain is DNA damage-binding protein 2 from Oryza sativa subsp. japonica (Rice).